The chain runs to 363 residues: Dihydroorotate dehydrogenase (quinone) (363 aa).

FMN is bound by residues 62–66 (AGFDK) and Thr86. Substrate is bound at residue Lys66. 111–115 (NRMGF) lines the substrate pocket. Asn142 and Asn175 together coordinate FMN. Asn175 is a substrate binding site. The Nucleophile role is filled by Ser178. Residue Asn180 participates in substrate binding. FMN is bound by residues Lys216 and Thr244. 245–246 (NT) lines the substrate pocket. FMN is bound by residues Gly267, Gly296, and 317–318 (YT).

Belongs to the dihydroorotate dehydrogenase family. Type 2 subfamily. As to quaternary structure, monomer. Requires FMN as cofactor.

The protein localises to the cell membrane. It catalyses the reaction (S)-dihydroorotate + a quinone = orotate + a quinol. Its pathway is pyrimidine metabolism; UMP biosynthesis via de novo pathway; orotate from (S)-dihydroorotate (quinone route): step 1/1. Its function is as follows. Catalyzes the conversion of dihydroorotate to orotate with quinone as electron acceptor. The polypeptide is Dihydroorotate dehydrogenase (quinone) (Anaeromyxobacter sp. (strain Fw109-5)).